The primary structure comprises 24 residues: Ascaphin-7 (24 aa).

As to expression, expressed by the skin glands.

It is found in the secreted. Functionally, antimicrobial peptide that shows higher potency against Gram-negative bacteria than against Gram-positive bacteria. Has a very week hemolytic activity. The protein is Ascaphin-7 of Ascaphus truei (Coastal tailed frog).